Consider the following 224-residue polypeptide: Large ribosomal subunit protein uL3 (224 aa).

Gln-158 carries the N5-methylglutamine modification.

Belongs to the universal ribosomal protein uL3 family. In terms of assembly, part of the 50S ribosomal subunit. Forms a cluster with proteins L14 and L19. Methylated by PrmB.

One of the primary rRNA binding proteins, it binds directly near the 3'-end of the 23S rRNA, where it nucleates assembly of the 50S subunit. This Paracidovorax citrulli (strain AAC00-1) (Acidovorax citrulli) protein is Large ribosomal subunit protein uL3.